Consider the following 523-residue polypeptide: MKSRFLLKIFIFLAVFGVDSVRAADCTEKTFKTGTVCVCSLDSCDEIPPLDITMGQAALYTTSHTGARLHRDVIYATDTEPFGTLHMTIDSSKKYQTIQGFGSTFSDASGANLKSLPDKLSDLIMKQYFSDTGLNLQFGRVPIASTDFSGRVYSYNDVANDYSMQNFNLTKEDFQWKIPYIKNAQKYNPNLKLFAAPWAAPGWLKTTKEMTGPGALNGKAGDNYHQAYAKYFVRFLEEYGKSGISFWGLSTQNQPTLGSDKKNKIQSTLFTAETQRDFIKTDLGPALAASSSGKDVKLLILDDNRGNLPKWADTVLNDMDAAKYVGGIGVHAYQDGETDNHLDETHKKHPNFFILGTEASEGYGSKDTHVDYGNWDRAADTASDILDNMNNWMTGWTERNLILDALGGPSWVSDYTDAPVIAFPAMAQFYKQPMFYAIAHFSHFIKPGAVRIDHSLNVIELEVETTAFLNPDGSKVIVMLNKGSLVSTEHTVVVQDAADSRNHYHFTLPHRAITTLYIQTSQF.

The signal sequence occupies residues 1-23 (MKSRFLLKIFIFLAVFGVDSVRA). The N-linked (GlcNAc...) asparagine glycan is linked to Asn168. Glu358 (nucleophile) is an active-site residue.

The protein belongs to the glycosyl hydrolase 30 family.

The catalysed reaction is a beta-D-glucosylceramide + H2O = an N-acyl-sphingoid base + D-glucose. The enzyme catalyses a beta-D-glucosyl-(1&lt;-&gt;1')-N-acylsphing-4-enine + H2O = an N-acylsphing-4-enine + D-glucose. It carries out the reaction an N-acyl-1-beta-D-glucosyl-15-methylhexadecasphing-4-enine + H2O = an N-acyl-15-methylhexadecasphing-4-enine + D-glucose. The protein operates within lipid metabolism; sphingolipid metabolism. Glucosylceramidase that catalyzes the hydrolysis of glucosylceramides into free ceramides and glucose. C.elegans contains specific sphingoid bases, which are unique or different in structure compared to the sphingoid bases found in other animals. Two examples of these distinctive compounds are: 15-methylhexadecasphinganine and 15-methylhexadecasphing-4-enine. This is Putative glucosylceramidase 1 (gba-1) from Caenorhabditis elegans.